The chain runs to 352 residues: 7,8-didemethyl-8-hydroxy-5-deazariboflavin synthase (352 aa).

The Radical SAM core domain occupies 35-275; sequence ITFSKNAFIP…EGISIQVPPN (241 aa). [4Fe-4S] cluster-binding residues include C49, C53, and C56.

It belongs to the radical SAM superfamily. CofG family. As to quaternary structure, consists of two subunits, CofG and CofH. [4Fe-4S] cluster serves as cofactor.

The enzyme catalyses 5-amino-5-(4-hydroxybenzyl)-6-(D-ribitylimino)-5,6-dihydrouracil + S-adenosyl-L-methionine = 7,8-didemethyl-8-hydroxy-5-deazariboflavin + 5'-deoxyadenosine + L-methionine + NH4(+) + H(+). It participates in cofactor biosynthesis; coenzyme F0 biosynthesis. Catalyzes the radical-mediated synthesis of 7,8-didemethyl-8-hydroxy-5-deazariboflavin from 5-amino-5-(4-hydroxybenzyl)-6-(D-ribitylimino)-5,6-dihydrouracil. This Methanococcus maripaludis (strain C5 / ATCC BAA-1333) protein is 7,8-didemethyl-8-hydroxy-5-deazariboflavin synthase.